An 883-amino-acid chain; its full sequence is Alanine--tRNA ligase (883 aa).

Positions 562, 566, 664, and 668 each coordinate Zn(2+).

It belongs to the class-II aminoacyl-tRNA synthetase family. Homotetramer. Zn(2+) is required as a cofactor.

The protein localises to the cytoplasm. The catalysed reaction is tRNA(Ala) + L-alanine + ATP = L-alanyl-tRNA(Ala) + AMP + diphosphate. Its function is as follows. Catalyzes the attachment of alanine to tRNA(Ala) in a two-step reaction: alanine is first activated by ATP to form Ala-AMP and then transferred to the acceptor end of tRNA(Ala). Also edits incorrectly charged Ser-tRNA(Ala) and Gly-tRNA(Ala) via its editing domain. The sequence is that of Alanine--tRNA ligase from Buchnera aphidicola subsp. Schizaphis graminum (strain Sg).